The following is a 57-amino-acid chain: MAVPARRTSKTKKRLRRTHEKLKSPEISFDENLGDYRKSHHVSLKGYYGGKKVMDKK.

The tract at residues 1–22 (MAVPARRTSKTKKRLRRTHEKL) is disordered. Residues 7 to 20 (RTSKTKKRLRRTHE) show a composition bias toward basic residues.

It belongs to the bacterial ribosomal protein bL32 family.

The sequence is that of Large ribosomal subunit protein bL32A (rpmF1) from Enterococcus faecalis (strain ATCC 700802 / V583).